The chain runs to 394 residues: Flagellin B (394 aa).

Belongs to the bacterial flagellin family.

The protein resides in the secreted. It localises to the bacterial flagellum. Its function is as follows. Flagellin is the subunit protein which polymerizes to form the filaments of bacterial flagella. The polypeptide is Flagellin B (flaB) (Rhizobium meliloti (strain 1021) (Ensifer meliloti)).